A 371-amino-acid polypeptide reads, in one-letter code: Solute carrier family 35 member F6 (371 aa).

Residues 1 to 18 (MAWTKYQLFLAGLMLVTG) form the signal peptide. 2 consecutive transmembrane segments (helical) span residues 48–68 (FLQA…FYLL) and 89–109 (LLFL…YVAL). Positions 104–160 (LMYVALNMTSASSFQMLRGAVIIFTGLFSVAFLGRRLVLSQWLGILATIAGLVVVGL) constitute an EamA domain. A glycan (N-linked (GlcNAc...) asparagine) is linked at Asn110. 7 consecutive transmembrane segments (helical) span residues 117–137 (FQML…AFLG), 140–160 (LVLS…VVGL), 176–196 (VITG…QMVL), 216–236 (GLFG…IPAG), 261–281 (LIAV…FAGI), 295–312 (LDSL…ALGW), and 317–336 (ALQI…YNGL). Positions 352–371 (EESEQERLLGGTRTPINDAS) are disordered. The residue at position 365 (Thr365) is a Phosphothreonine.

The protein belongs to the SLC35F solute transporter family. As to quaternary structure, interacts with SLC25A5. Expressed in pancreatic ductal adenocarcinoma (PDAC) (at protein level). Strongly expressed in prostate and thyroid. Weakly expressed in lung, heart, liver and kidney.

The protein resides in the mitochondrion. It is found in the lysosome membrane. In terms of biological role, involved in the maintenance of mitochondrial membrane potential in pancreatic ductal adenocarcinoma (PDAC) cells. Promotes pancreatic ductal adenocarcinoma (PDAC) cell growth. May play a role as a nucleotide-sugar transporter. The chain is Solute carrier family 35 member F6 (SLC35F6) from Homo sapiens (Human).